A 421-amino-acid polypeptide reads, in one-letter code: 3-phosphoshikimate 1-carboxyvinyltransferase (421 aa).

3-phosphoshikimate contacts are provided by K19, S20, and R24. Position 19 (K19) interacts with phosphoenolpyruvate. Positions 88 and 116 each coordinate phosphoenolpyruvate. 3-phosphoshikimate-binding residues include S160, Q162, D307, and K334. Phosphoenolpyruvate is bound at residue Q162. D307 (proton acceptor) is an active-site residue. Phosphoenolpyruvate contacts are provided by R338 and R380.

The protein belongs to the EPSP synthase family. Monomer.

The protein resides in the cytoplasm. It carries out the reaction 3-phosphoshikimate + phosphoenolpyruvate = 5-O-(1-carboxyvinyl)-3-phosphoshikimate + phosphate. The protein operates within metabolic intermediate biosynthesis; chorismate biosynthesis; chorismate from D-erythrose 4-phosphate and phosphoenolpyruvate: step 6/7. Its function is as follows. Catalyzes the transfer of the enolpyruvyl moiety of phosphoenolpyruvate (PEP) to the 5-hydroxyl of shikimate-3-phosphate (S3P) to produce enolpyruvyl shikimate-3-phosphate and inorganic phosphate. This Thermotoga sp. (strain RQ2) protein is 3-phosphoshikimate 1-carboxyvinyltransferase.